A 44-amino-acid chain; its full sequence is Small ribosomal subunit protein eS31 (44 aa).

Zn(2+)-binding residues include Cys-18, Cys-21, Cys-35, and Cys-38. The C4-type zinc-finger motif lies at 18-38 (CPRCGDTFLAAHDDRQVCGRC).

This sequence belongs to the eukaryotic ribosomal protein eS31 family. Part of the 30S ribosomal subunit. Zn(2+) serves as cofactor.

The polypeptide is Small ribosomal subunit protein eS31 (Halobacterium salinarum (strain ATCC 29341 / DSM 671 / R1)).